Reading from the N-terminus, the 209-residue chain is PF03932 family protein CutC (209 aa).

The protein belongs to the CutC family.

It is found in the cytoplasm. Might participate in the control of copper homeostasis; data from other bacteria suggests it is not involved. This is PF03932 family protein CutC from Enterococcus faecalis (strain ATCC 700802 / V583).